The chain runs to 389 residues: Lipid-A-disaccharide synthase (389 aa).

This sequence belongs to the LpxB family.

It carries out the reaction a lipid X + a UDP-2-N,3-O-bis[(3R)-3-hydroxyacyl]-alpha-D-glucosamine = a lipid A disaccharide + UDP + H(+). It functions in the pathway bacterial outer membrane biogenesis; LPS lipid A biosynthesis. Functionally, condensation of UDP-2,3-diacylglucosamine and 2,3-diacylglucosamine-1-phosphate to form lipid A disaccharide, a precursor of lipid A, a phosphorylated glycolipid that anchors the lipopolysaccharide to the outer membrane of the cell. This is Lipid-A-disaccharide synthase from Burkholderia vietnamiensis (strain G4 / LMG 22486) (Burkholderia cepacia (strain R1808)).